Reading from the N-terminus, the 1381-residue chain is Regulator of G-protein signaling 12 (1381 aa).

The 78-residue stretch at 21–98 (SVEVARGRAG…VLHMVIAEGT (78 aa)) folds into the PDZ domain. Phosphoserine is present on residues Ser171 and Ser194. Residue Lys195 forms a Glycyl lysine isopeptide (Lys-Gly) (interchain with G-Cter in SUMO2) linkage. A PID domain is found at 223–390 (SILNVAMVVG…VLQFISVLYR (168 aa)). 3 disordered regions span residues 409 to 428 (ADAH…IGNF), 442 to 528 (LGGG…GAAG), and 620 to 644 (RKTK…SQRT). The segment covering 412–428 (HQNNSTSSNSDSGIGNF) has biased composition (polar residues). Omega-N-methylarginine is present on residues Arg524 and Arg633. A phosphoserine mark is found at Ser661 and Ser671. Residues 715–832 (SFERLLQDPV…LKSQLYQECV (118 aa)) form the RGS domain. Positions 842–942 (PDSQQVPSSP…ESQGSVSSAG (101 aa)) are disordered. The span at 849-869 (SSPASKHSISSDHSNVSTPKK) shows a compositional bias: low complexity. Residues Ser850 and Ser879 each carry the phosphoserine modification. Basic and acidic residues predominate over residues 914–923 (DHGDHAHDAP). At Ser943 the chain carries Phosphoserine. RBD domains follow at residues 962–1032 (KHCC…LEKR) and 1034–1104 (LFRL…LEER). The segment covering 1102–1117 (EERDPSRGKVSTDKQK) has biased composition (basic and acidic residues). A disordered region spans residues 1102–1169 (EERDPSRGKV…RDPRLSKREE (68 aa)). The segment covering 1122 to 1132 (KQNSAVNSSPR) has biased composition (polar residues). The span at 1151–1169 (IRGENGKSARDPRLSKREE) shows a compositional bias: basic and acidic residues. A GoLoco domain is found at 1187–1209 (AEEFFELISKAQSNRADDQRGLL). Disordered regions lie at residues 1227–1318 (SELA…QEGT) and 1347–1381 (LMGE…TSRF). The span at 1261 to 1280 (SDSPATSPASAQSPCSAYSP) shows a compositional bias: low complexity. The segment covering 1361 to 1381 (LPPPPTPQDTPGPPRPGTSRF) has biased composition (pro residues).

As to quaternary structure, interacts with GNAI1, GNAI2 and GNAI3; the interactions are GDP-dependent. Expressed in brain.

It localises to the nucleus. It is found in the cytoplasm. Its subcellular location is the cell projection. The protein localises to the dendrite. The protein resides in the synapse. Its function is as follows. Regulates G protein-coupled receptor signaling cascades. Inhibits signal transduction by increasing the GTPase activity of G protein alpha subunits, thereby driving them into their inactive GDP-bound form. The chain is Regulator of G-protein signaling 12 (Rgs12) from Mus musculus (Mouse).